We begin with the raw amino-acid sequence, 654 residues long: tRNA uridine 5-carboxymethylaminomethyl modification enzyme MnmG (654 aa).

17–22 (GGGHAG) contributes to the FAD binding site. 289 to 303 (GPRYCPSIEDKIVKF) is a binding site for NAD(+).

It belongs to the MnmG family. Homodimer. Heterotetramer of two MnmE and two MnmG subunits. The cofactor is FAD.

Its subcellular location is the cytoplasm. In terms of biological role, NAD-binding protein involved in the addition of a carboxymethylaminomethyl (cmnm) group at the wobble position (U34) of certain tRNAs, forming tRNA-cmnm(5)s(2)U34. This chain is tRNA uridine 5-carboxymethylaminomethyl modification enzyme MnmG, found in Prochlorococcus marinus subsp. pastoris (strain CCMP1986 / NIES-2087 / MED4).